A 1001-amino-acid polypeptide reads, in one-letter code: Kinesin-like protein KIN-14P (1001 aa).

In terms of domain architecture, Calponin-homology (CH) spans 53–172 (AIRRYEAANW…CVLSLRSFSE (120 aa)). Positions 284 to 300 (NESVKHALDPNDDKLLS) are enriched in basic and acidic residues. Residues 284-322 (NESVKHALDPNDDKLLSRADTPPEMESTCTCSTGNMDEE) are disordered. The region spanning 426-748 (NIRVYCRVRP…LKFAERVATV (323 aa)) is the Kinesin motor domain. ATP is bound at residue 509-516 (GQTGSGKT). The stretch at 756 to 784 (NKEGGEVKELKEQIACLKAALAKKDGETE) forms a coiled coil. Disordered regions lie at residues 804–830 (PPAF…QKKR) and 890–1001 (EPQW…SAKK). Residues 972–984 (PSASTKNGKQLSL) are compositionally biased toward polar residues.

The protein belongs to the TRAFAC class myosin-kinesin ATPase superfamily. Kinesin family. KIN-14 subfamily.

This chain is Kinesin-like protein KIN-14P, found in Oryza sativa subsp. japonica (Rice).